Consider the following 500-residue polypeptide: Cytochrome P450 71D7 (500 aa).

Cys441 serves as a coordination point for heme.

Belongs to the cytochrome P450 family. Heme serves as cofactor.

The sequence is that of Cytochrome P450 71D7 (CYP71D7) from Solanum chacoense (Chaco potato).